A 157-amino-acid polypeptide reads, in one-letter code: uncharacterized protein (157 aa).

The protein belongs to the mimivirus L242/L243 family.

This is an uncharacterized protein from Acanthamoeba polyphaga (Amoeba).